A 53-amino-acid chain; its full sequence is Large ribosomal subunit protein bL33 (53 aa).

Belongs to the bacterial ribosomal protein bL33 family.

This chain is Large ribosomal subunit protein bL33, found in Malacoplasma penetrans (strain HF-2) (Mycoplasma penetrans).